Consider the following 512-residue polypeptide: MENSGLLALPLNAATIVPEGAILLALLSSLLVDLAGEKTASRWVPPICYAGLGSALILLASQWNSTLSPSFLGAFLADNLAIAFRAIIATSTLFSLMISWRYVERSGAPMGEYAAILLAATLGAMFLCGSTDLVSIFVSLETLSVSSYLLAGYMKQDARSSEAALKYLLVGSATAAVFLYGASLLYGLTGGSTNLDAVALALQSSDTPVAALALVFVLATVAFKIAAVPFHQWTPDVYEGAPTPIVAFLSVGSKTAGFALALRLLVGCFESFDIQWKFLFSLLAILSMVLGNIVALSQTSMKRMLAYSSIGQAGFVMIGLVCGTEDGFAAMILYLATYLFMNMGAFACVILFSIRTGSDLIADYAGLYQKDPLVTIGLSLCLLSLGGIPPMLGFFGKIYLFFAGWADHQYLLVVTGLITSVVSIYYYISVIRMMVVIEPKEASDVVKSYAAVNWNIPGLNPLRVALLVCVIVTGIGGIFSNPLFQWANSAVAGTPILQKVIVTALGTTGTIS.

14 consecutive transmembrane segments (helical) span residues 6–26 (LLAL…LLAL), 43–63 (WVPP…ASQW), 80–100 (LAIA…MISW), 107–127 (GAPM…AMFL), 133–153 (LVSI…LAGY), 168–188 (LLVG…LYGL), 210–230 (AALA…AVPF), 242–262 (PTPI…ALAL), 276–296 (WKFL…IVAL), 304–324 (MLAY…VCGT), 332–352 (ILYL…VILF), 376–396 (IGLS…GFFG), 411–431 (LLVV…ISVI), and 464–484 (VALL…NPLF).

It belongs to the complex I subunit 2 family. NDH-1 can be composed of about 15 different subunits; different subcomplexes with different compositions have been identified which probably have different functions.

Its subcellular location is the plastid. It is found in the organellar chromatophore thylakoid membrane. It catalyses the reaction a plastoquinone + NADH + (n+1) H(+)(in) = a plastoquinol + NAD(+) + n H(+)(out). It carries out the reaction a plastoquinone + NADPH + (n+1) H(+)(in) = a plastoquinol + NADP(+) + n H(+)(out). In terms of biological role, NDH-1 shuttles electrons from an unknown electron donor, via FMN and iron-sulfur (Fe-S) centers, to quinones in the respiratory and/or the photosynthetic chain. The immediate electron acceptor for the enzyme in this species is believed to be plastoquinone. Couples the redox reaction to proton translocation, and thus conserves the redox energy in a proton gradient. Cyanobacterial NDH-1 also plays a role in inorganic carbon-concentration. The sequence is that of NAD(P)H-quinone oxidoreductase subunit 2, organellar chromatophore from Paulinella chromatophora.